Here is a 332-residue protein sequence, read N- to C-terminus: Glycerol-3-phosphate dehydrogenase [NAD(P)+] (332 aa).

Tryptophan 11, arginine 30, and lysine 108 together coordinate NADPH. The sn-glycerol 3-phosphate site is built by lysine 108, glycine 137, and serine 139. Alanine 141 contributes to the NADPH binding site. Sn-glycerol 3-phosphate contacts are provided by lysine 192, aspartate 245, serine 255, arginine 256, and asparagine 257. Lysine 192 functions as the Proton acceptor in the catalytic mechanism. An NADPH-binding site is contributed by arginine 256. Valine 280 and glutamate 282 together coordinate NADPH.

It belongs to the NAD-dependent glycerol-3-phosphate dehydrogenase family.

It is found in the cytoplasm. It catalyses the reaction sn-glycerol 3-phosphate + NAD(+) = dihydroxyacetone phosphate + NADH + H(+). The catalysed reaction is sn-glycerol 3-phosphate + NADP(+) = dihydroxyacetone phosphate + NADPH + H(+). Its pathway is membrane lipid metabolism; glycerophospholipid metabolism. Functionally, catalyzes the reduction of the glycolytic intermediate dihydroxyacetone phosphate (DHAP) to sn-glycerol 3-phosphate (G3P), the key precursor for phospholipid synthesis. The polypeptide is Glycerol-3-phosphate dehydrogenase [NAD(P)+] (Burkholderia pseudomallei (strain 1710b)).